The following is a 327-amino-acid chain: Biotin synthase (327 aa).

One can recognise a Radical SAM core domain in the interval 52–279; that stretch reads NAIQRSTLLS…TSWVRLSAGR (228 aa). Residues C67, C71, and C74 each coordinate [4Fe-4S] cluster. Residues C111, C142, C202, and R274 each coordinate [2Fe-2S] cluster.

This sequence belongs to the radical SAM superfamily. Biotin synthase family. In terms of assembly, homodimer. The cofactor is [4Fe-4S] cluster. [2Fe-2S] cluster is required as a cofactor.

The catalysed reaction is (4R,5S)-dethiobiotin + (sulfur carrier)-SH + 2 reduced [2Fe-2S]-[ferredoxin] + 2 S-adenosyl-L-methionine = (sulfur carrier)-H + biotin + 2 5'-deoxyadenosine + 2 L-methionine + 2 oxidized [2Fe-2S]-[ferredoxin]. It functions in the pathway cofactor biosynthesis; biotin biosynthesis; biotin from 7,8-diaminononanoate: step 2/2. Catalyzes the conversion of dethiobiotin (DTB) to biotin by the insertion of a sulfur atom into dethiobiotin via a radical-based mechanism. In Dechloromonas aromatica (strain RCB), this protein is Biotin synthase.